Here is a 554-residue protein sequence, read N- to C-terminus: Potassium-transporting ATPase potassium-binding subunit (554 aa).

10 helical membrane passes run 1–21, 60–80, 131–151, 174–194, 246–266, 279–299, 375–395, 412–432, 481–501, and 525–545; these read MSPVLAGVLQLVALIAALALA, PAYLRGVLAFSAVSVLFLYVL, GLAVQNFVSASVGIAVAVALV, VRVLLPVSVIAAIVLVACGAI, PGPFSNLFEIFLILLIPFALT, GYAILATMVTIWIGFTALMMW, GLYGILIMAVIAVFIAGLMVG, FAACYILITPALALVFTAAAM, IGIVMLLGRFVPMVFVLALAG, and GLLVGAILIITGLTYFPALAL.

The protein belongs to the KdpA family. The system is composed of three essential subunits: KdpA, KdpB and KdpC.

Its subcellular location is the cell membrane. Part of the high-affinity ATP-driven potassium transport (or Kdp) system, which catalyzes the hydrolysis of ATP coupled with the electrogenic transport of potassium into the cytoplasm. This subunit binds the extracellular potassium ions and delivers the ions to the membrane domain of KdpB through an intramembrane tunnel. The sequence is that of Potassium-transporting ATPase potassium-binding subunit from Streptomyces avermitilis (strain ATCC 31267 / DSM 46492 / JCM 5070 / NBRC 14893 / NCIMB 12804 / NRRL 8165 / MA-4680).